A 512-amino-acid polypeptide reads, in one-letter code: Krueppel-like factor 11 (512 aa).

Residues 109–128 (PQSPDLVEPSTRTPVSPQVT) are disordered. A compositionally biased stretch (polar residues) spans 118–128 (STRTPVSPQVT). Ser124 is modified (phosphoserine). 3 consecutive C2H2-type zinc fingers follow at residues 394-418 (YVCSFPGCRKTYFKSSHLKAHLRTH), 424-448 (FNCSWDGCDKKFARSDELSRHRRTH), and 454-476 (FVCPVCDRRFMRSDHLTKHARRH).

Belongs to the Sp1 C2H2-type zinc-finger protein family. As to quaternary structure, interacts with SIN3A. Ubiquitous. Higher expression in erythroid cells.

It localises to the nucleus. Its function is as follows. Transcription factor. Activates the epsilon- and gamma-globin gene promoters and, to a much lower degree, the beta-globin gene and represses promoters containing SP1-like binding inhibiting cell growth. Represses transcription of SMAD7 which enhances TGF-beta signaling. Induces apoptosis. This chain is Krueppel-like factor 11 (KLF11), found in Homo sapiens (Human).